Here is a 327-residue protein sequence, read N- to C-terminus: Zinc finger protein 444 (327 aa).

Residue Met1 is modified to N-acetylmethionine. Lys8 is covalently cross-linked (Glycyl lysine isopeptide (Lys-Gly) (interchain with G-Cter in SUMO2)). 2 positions are modified to phosphoserine: Ser18 and Ser104. Positions 20 to 104 constitute an SCAN box domain; that stretch reads WHRFRRFHLG…LEELWGPAAS (85 aa). A disordered region spans residues 101 to 171; sequence PAASPDGSSA…SPPLAPGLPA (71 aa). Residues 106 to 118 are compositionally biased toward polar residues; the sequence is DGSSATRVPQDVT. Over residues 134-148 the composition is skewed to low complexity; it reads PLAGTAPGAEGPAPG. C2H2-type zinc fingers lie at residues 179–201 and 207–229; these read TSCP…RQSH and HACP…RDTH. A Glycyl lysine isopeptide (Lys-Gly) (interchain with G-Cter in SUMO2) cross-link involves residue Lys190. The segment at 220 to 243 is disordered; that stretch reads EHLRRHRDTHPGSPGSPGPALRPL. Position 235 is a phosphoserine (Ser235). C2H2-type zinc fingers lie at residues 250–272 and 278–300; these read HACC…RKTH and FACW…QRIH. The segment covering 305–314 has biased composition (low complexity); the sequence is ASAQGAVAPG. A disordered region spans residues 305 to 327; sequence ASAQGAVAPGPDGGGPFPPWPLG.

Belongs to the krueppel C2H2-type zinc-finger protein family.

Its subcellular location is the nucleus. Its function is as follows. Transcriptional regulator. Binds to the 5'-flanking critical region of the SCARF1 promoter. This is Zinc finger protein 444 (ZNF444) from Homo sapiens (Human).